Here is a 289-residue protein sequence, read N- to C-terminus: Protease HtpX homolog (289 aa).

Transmembrane regions (helical) follow at residues 11–31 (AALF…IAAG) and 34–54 (STTP…YGYW). A Zn(2+)-binding site is contributed by His138. The active site involves Glu139. Position 142 (His142) interacts with Zn(2+). Helical transmembrane passes span 152–172 (SVVA…LIFG) and 182–202 (LATI…QMAI). Glu207 lines the Zn(2+) pocket.

This sequence belongs to the peptidase M48B family. Requires Zn(2+) as cofactor.

It localises to the cell membrane. The chain is Protease HtpX homolog from Paenarthrobacter aurescens (strain TC1).